A 314-amino-acid polypeptide reads, in one-letter code: Mitochondrial thiamine pyrophosphate carrier 1 (314 aa).

Helical transmembrane passes span 14–30 (VAAW…GLLA), 84–100 (LLYV…YSLF), 116–136 (LVVG…FDVL), 170–186 (GSIA…SIMF), 217–233 (SAGT…TFPL), and 285–302 (GILV…VSFW). 3 Solcar repeats span residues 14–103 (VAAW…FNRY), 110–195 (EARL…IRIY), and 210–310 (ELAT…AIHY).

This sequence belongs to the mitochondrial carrier (TC 2.A.29) family.

Its subcellular location is the mitochondrion inner membrane. In terms of biological role, mitochondrial transporter that mediates uptake of thiamine pyrophosphate (ThPP) into mitochondria. In Saccharomyces cerevisiae (strain ATCC 204508 / S288c) (Baker's yeast), this protein is Mitochondrial thiamine pyrophosphate carrier 1 (TPC1).